The following is a 443-amino-acid chain: Exodeoxyribonuclease 7 large subunit (443 aa).

It belongs to the XseA family. As to quaternary structure, heterooligomer composed of large and small subunits.

It is found in the cytoplasm. It catalyses the reaction Exonucleolytic cleavage in either 5'- to 3'- or 3'- to 5'-direction to yield nucleoside 5'-phosphates.. Bidirectionally degrades single-stranded DNA into large acid-insoluble oligonucleotides, which are then degraded further into small acid-soluble oligonucleotides. The chain is Exodeoxyribonuclease 7 large subunit from Legionella pneumophila (strain Corby).